Here is a 216-residue protein sequence, read N- to C-terminus: Ribose-5-phosphate isomerase A (216 aa).

Substrate contacts are provided by residues 26-29, 79-82, and 92-95; these read TGST, DGAD, and KGGG. E101 acts as the Proton acceptor in catalysis. Position 119 (K119) interacts with substrate.

The protein belongs to the ribose 5-phosphate isomerase family. As to quaternary structure, homodimer.

The catalysed reaction is aldehydo-D-ribose 5-phosphate = D-ribulose 5-phosphate. Its pathway is carbohydrate degradation; pentose phosphate pathway; D-ribose 5-phosphate from D-ribulose 5-phosphate (non-oxidative stage): step 1/1. Functionally, catalyzes the reversible conversion of ribose-5-phosphate to ribulose 5-phosphate. The sequence is that of Ribose-5-phosphate isomerase A from Legionella pneumophila (strain Lens).